The following is a 321-amino-acid chain: Phosphate acyltransferase (321 aa).

Belongs to the PlsX family. Homodimer. Probably interacts with PlsY.

It is found in the cytoplasm. The enzyme catalyses a fatty acyl-[ACP] + phosphate = an acyl phosphate + holo-[ACP]. The protein operates within lipid metabolism; phospholipid metabolism. Its function is as follows. Catalyzes the reversible formation of acyl-phosphate (acyl-PO(4)) from acyl-[acyl-carrier-protein] (acyl-ACP). This enzyme utilizes acyl-ACP as fatty acyl donor, but not acyl-CoA. This Chlamydia trachomatis serovar L2 (strain ATCC VR-902B / DSM 19102 / 434/Bu) protein is Phosphate acyltransferase.